Consider the following 215-residue polypeptide: uncharacterized protein (215 aa).

6 consecutive transmembrane segments (helical) span residues 21 to 40, 50 to 69, 95 to 117, 122 to 144, 157 to 179, and 185 to 207; these read IIKY…VLIN, LIFS…TIIF, FVAI…YVFF, LEIA…LVVL, NFVG…LILQ, and LIFI…SAYL.

Belongs to the CcmB/CycW/HelB family.

The protein localises to the cell membrane. This is an uncharacterized protein from Rickettsia prowazekii (strain Madrid E).